The primary structure comprises 140 residues: Cysteine desulfuration protein SufE (140 aa).

Cys-51 functions as the Cysteine persulfide intermediate in the catalytic mechanism.

This sequence belongs to the SufE family. As to quaternary structure, homodimer. Interacts with SufS.

It localises to the cytoplasm. It functions in the pathway cofactor biosynthesis; iron-sulfur cluster biosynthesis. In terms of biological role, participates in cysteine desulfuration mediated by SufS. Cysteine desulfuration mobilizes sulfur from L-cysteine to yield L-alanine and constitutes an essential step in sulfur metabolism for biosynthesis of a variety of sulfur-containing biomolecules. Functions as a sulfur acceptor for SufS, by mediating the direct transfer of the sulfur atom from the S-sulfanylcysteine of SufS, an intermediate product of cysteine desulfuration process. The sequence is that of Cysteine desulfuration protein SufE from Yersinia pseudotuberculosis serotype O:1b (strain IP 31758).